The primary structure comprises 490 residues: Aspartyl/glutamyl-tRNA(Asn/Gln) amidotransferase subunit B (490 aa).

It belongs to the GatB/GatE family. GatB subfamily. In terms of assembly, heterotrimer of A, B and C subunits.

The catalysed reaction is L-glutamyl-tRNA(Gln) + L-glutamine + ATP + H2O = L-glutaminyl-tRNA(Gln) + L-glutamate + ADP + phosphate + H(+). The enzyme catalyses L-aspartyl-tRNA(Asn) + L-glutamine + ATP + H2O = L-asparaginyl-tRNA(Asn) + L-glutamate + ADP + phosphate + 2 H(+). In terms of biological role, allows the formation of correctly charged Asn-tRNA(Asn) or Gln-tRNA(Gln) through the transamidation of misacylated Asp-tRNA(Asn) or Glu-tRNA(Gln) in organisms which lack either or both of asparaginyl-tRNA or glutaminyl-tRNA synthetases. The reaction takes place in the presence of glutamine and ATP through an activated phospho-Asp-tRNA(Asn) or phospho-Glu-tRNA(Gln). The protein is Aspartyl/glutamyl-tRNA(Asn/Gln) amidotransferase subunit B of Synechococcus sp. (strain JA-2-3B'a(2-13)) (Cyanobacteria bacterium Yellowstone B-Prime).